The chain runs to 511 residues: D-alanine--D-alanyl carrier protein ligase (511 aa).

Thr-152 to Ser-153 contacts ATP. Residue Asp-199 participates in D-alanine binding. Position 294-299 (Asn-294–Thr-299) interacts with ATP. Val-303 provides a ligand contact to D-alanine. ATP is bound by residues Asp-385, Tyr-397–Arg-400, and Lys-499. Lys-499 contributes to the D-alanine binding site.

The protein belongs to the ATP-dependent AMP-binding enzyme family. DltA subfamily.

It is found in the cytoplasm. The catalysed reaction is holo-[D-alanyl-carrier protein] + D-alanine + ATP = D-alanyl-[D-alanyl-carrier protein] + AMP + diphosphate. It functions in the pathway cell wall biogenesis; lipoteichoic acid biosynthesis. Catalyzes the first step in the D-alanylation of lipoteichoic acid (LTA), the activation of D-alanine and its transfer onto the D-alanyl carrier protein (Dcp) DltC. In an ATP-dependent two-step reaction, forms a high energy D-alanyl-AMP intermediate, followed by transfer of the D-alanyl residue as a thiol ester to the phosphopantheinyl prosthetic group of the Dcp. D-alanylation of LTA plays an important role in modulating the properties of the cell wall in Gram-positive bacteria, influencing the net charge of the cell wall. This is D-alanine--D-alanyl carrier protein ligase from Streptococcus agalactiae serotype V (strain ATCC BAA-611 / 2603 V/R).